We begin with the raw amino-acid sequence, 388 residues long: Chorismate synthase (388 aa).

Arg-39 and Arg-45 together coordinate NADP(+). The interval 95 to 118 is disordered; that stretch reads EKNEKSRRVSRPRPGHADLVGGMK. FMN contacts are provided by residues 130 to 132, 251 to 252, Gly-296, 311 to 315, and Arg-337; these read RSS, NA, and KPIPT.

This sequence belongs to the chorismate synthase family. Homotetramer. It depends on FMNH2 as a cofactor.

The enzyme catalyses 5-O-(1-carboxyvinyl)-3-phosphoshikimate = chorismate + phosphate. It functions in the pathway metabolic intermediate biosynthesis; chorismate biosynthesis; chorismate from D-erythrose 4-phosphate and phosphoenolpyruvate: step 7/7. Functionally, catalyzes the anti-1,4-elimination of the C-3 phosphate and the C-6 proR hydrogen from 5-enolpyruvylshikimate-3-phosphate (EPSP) to yield chorismate, which is the branch point compound that serves as the starting substrate for the three terminal pathways of aromatic amino acid biosynthesis. This reaction introduces a second double bond into the aromatic ring system. The sequence is that of Chorismate synthase from Listeria monocytogenes serotype 4b (strain CLIP80459).